A 488-amino-acid chain; its full sequence is Glutamate--tRNA ligase (488 aa).

The 'HIGH' region motif lies at 11–21 (PSPTGQIHIGN). Zn(2+) contacts are provided by cysteine 108, cysteine 110, cysteine 135, and aspartate 137. Positions 252–256 (KLSKR) match the 'KMSKS' region motif. ATP is bound at residue lysine 255.

It belongs to the class-I aminoacyl-tRNA synthetase family. Glutamate--tRNA ligase type 1 subfamily. In terms of assembly, monomer. It depends on Zn(2+) as a cofactor.

It localises to the cytoplasm. The catalysed reaction is tRNA(Glu) + L-glutamate + ATP = L-glutamyl-tRNA(Glu) + AMP + diphosphate. Catalyzes the attachment of glutamate to tRNA(Glu) in a two-step reaction: glutamate is first activated by ATP to form Glu-AMP and then transferred to the acceptor end of tRNA(Glu). The chain is Glutamate--tRNA ligase from Natranaerobius thermophilus (strain ATCC BAA-1301 / DSM 18059 / JW/NM-WN-LF).